The primary structure comprises 457 residues: UDP-glycosyltransferase 708C2 (457 aa).

Catalysis depends on H32, which acts as the Proton acceptor. Residue H32 participates in an anthocyanidin binding. D129 acts as the Charge relay in catalysis. T150 lines the UDP-alpha-D-glucose pocket. Positions 279 to 280 (NR) are UDP. Residues V341, Q343, H358, W361, N362, S363, and E366 each contribute to the UDP-alpha-D-glucose site. An anthocyanidin is bound at residue G381. Positions 382 and 383 each coordinate UDP-alpha-D-glucose.

The protein belongs to the UDP-glycosyltransferase family. In terms of tissue distribution, expressed in cotyledons. Not detected in flowers, leaves, roots and hypocotyls.

It catalyses the reaction a 3'-hydro-2'-hydroxy-beta-oxodihydrochalcone + UDP-alpha-D-glucose = a 3'-(beta-D-glucopyranosyl)-2'-hydroxy-beta-oxodihydrochalcone + UDP + H(+). In terms of biological role, UDP-glucose-dependent glucosyltransferase catalyzing the c-glucosylation of 2-hydroxyflavanones (2-hydroxynaringenin, 2-hydroxyeriodictyol and 2-hydroxypinocembrin) and phloretin. No activity with flavanones, flavones or flavonols. This chain is UDP-glycosyltransferase 708C2, found in Fagopyrum esculentum (Common buckwheat).